Here is an 84-residue protein sequence, read N- to C-terminus: ATP synthase subunit c (84 aa).

The next 2 helical transmembrane spans lie at 9 to 29 and 54 to 74; these read IFGS…GFSL and IVAG…LLFI.

This sequence belongs to the ATPase C chain family. As to quaternary structure, F-type ATPases have 2 components, F(1) - the catalytic core - and F(0) - the membrane proton channel. F(1) has five subunits: alpha(3), beta(3), gamma(1), delta(1), epsilon(1). F(0) has three main subunits: a(1), b(2) and c(10-14). The alpha and beta chains form an alternating ring which encloses part of the gamma chain. F(1) is attached to F(0) by a central stalk formed by the gamma and epsilon chains, while a peripheral stalk is formed by the delta and b chains.

It localises to the cell inner membrane. Functionally, f(1)F(0) ATP synthase produces ATP from ADP in the presence of a proton or sodium gradient. F-type ATPases consist of two structural domains, F(1) containing the extramembraneous catalytic core and F(0) containing the membrane proton channel, linked together by a central stalk and a peripheral stalk. During catalysis, ATP synthesis in the catalytic domain of F(1) is coupled via a rotary mechanism of the central stalk subunits to proton translocation. Its function is as follows. Key component of the F(0) channel; it plays a direct role in translocation across the membrane. A homomeric c-ring of between 10-14 subunits forms the central stalk rotor element with the F(1) delta and epsilon subunits. This Histophilus somni (strain 2336) (Haemophilus somnus) protein is ATP synthase subunit c.